The following is a 347-amino-acid chain: Phosphoribosylformylglycinamidine cyclo-ligase (347 aa).

The protein belongs to the AIR synthase family.

It is found in the cytoplasm. It catalyses the reaction 2-formamido-N(1)-(5-O-phospho-beta-D-ribosyl)acetamidine + ATP = 5-amino-1-(5-phospho-beta-D-ribosyl)imidazole + ADP + phosphate + H(+). It participates in purine metabolism; IMP biosynthesis via de novo pathway; 5-amino-1-(5-phospho-D-ribosyl)imidazole from N(2)-formyl-N(1)-(5-phospho-D-ribosyl)glycinamide: step 2/2. The sequence is that of Phosphoribosylformylglycinamidine cyclo-ligase from Yersinia enterocolitica serotype O:8 / biotype 1B (strain NCTC 13174 / 8081).